The following is a 186-amino-acid chain: Probable chorismate pyruvate-lyase (186 aa).

Substrate is bound by residues Arg-80, Leu-118, and Glu-170.

Belongs to the UbiC family.

The protein localises to the cytoplasm. It catalyses the reaction chorismate = 4-hydroxybenzoate + pyruvate. Its pathway is cofactor biosynthesis; ubiquinone biosynthesis. In terms of biological role, removes the pyruvyl group from chorismate, with concomitant aromatization of the ring, to provide 4-hydroxybenzoate (4HB) for the ubiquinone pathway. The protein is Probable chorismate pyruvate-lyase of Pseudomonas syringae pv. syringae (strain B728a).